The following is a 448-amino-acid chain: tRNA modification GTPase MnmE (448 aa).

Positions 24, 81, and 120 each coordinate (6S)-5-formyl-5,6,7,8-tetrahydrofolate. Positions 216-373 (GLNVVLVGAP…LKRTLLREAG (158 aa)) constitute a TrmE-type G domain. Asn-226 is a K(+) binding site. Residues 226–231 (NVGKSS), 245–251 (TDIAGTT), and 270–273 (DTAG) contribute to the GTP site. Position 230 (Ser-230) interacts with Mg(2+). The K(+) site is built by Thr-245, Ile-247, and Thr-250. Thr-251 lines the Mg(2+) pocket. Lys-448 lines the (6S)-5-formyl-5,6,7,8-tetrahydrofolate pocket.

It belongs to the TRAFAC class TrmE-Era-EngA-EngB-Septin-like GTPase superfamily. TrmE GTPase family. Homodimer. Heterotetramer of two MnmE and two MnmG subunits. The cofactor is K(+).

It is found in the cytoplasm. In terms of biological role, exhibits a very high intrinsic GTPase hydrolysis rate. Involved in the addition of a carboxymethylaminomethyl (cmnm) group at the wobble position (U34) of certain tRNAs, forming tRNA-cmnm(5)s(2)U34. The polypeptide is tRNA modification GTPase MnmE (Neisseria meningitidis serogroup C / serotype 2a (strain ATCC 700532 / DSM 15464 / FAM18)).